The sequence spans 458 residues: Phosphoglucosamine mutase (458 aa).

Residue Ser106 is the Phosphoserine intermediate of the active site. Mg(2+)-binding residues include Ser106, Asp247, Asp249, and Asp251. Ser106 carries the phosphoserine modification.

Belongs to the phosphohexose mutase family. The cofactor is Mg(2+). In terms of processing, activated by phosphorylation.

It carries out the reaction alpha-D-glucosamine 1-phosphate = D-glucosamine 6-phosphate. Its function is as follows. Catalyzes the conversion of glucosamine-6-phosphate to glucosamine-1-phosphate. In Chlamydia trachomatis serovar L2 (strain ATCC VR-902B / DSM 19102 / 434/Bu), this protein is Phosphoglucosamine mutase.